Consider the following 408-residue polypeptide: Glutamate N-acetyltransferase (408 aa).

Residues Thr150, Lys176, Thr189, Glu271, Asn403, and Thr408 each contribute to the substrate site. The Nucleophile role is filled by Thr189.

This sequence belongs to the ArgJ family. In terms of assembly, heterotetramer of two alpha and two beta chains.

The protein localises to the cytoplasm. It carries out the reaction N(2)-acetyl-L-ornithine + L-glutamate = N-acetyl-L-glutamate + L-ornithine. It functions in the pathway amino-acid biosynthesis; L-arginine biosynthesis; L-ornithine and N-acetyl-L-glutamate from L-glutamate and N(2)-acetyl-L-ornithine (cyclic): step 1/1. In terms of biological role, catalyzes the transfer of the acetyl group from N(2)-acetylornithine to glutamate, forming N-acetylglutamate and L-ornithine. The protein is Glutamate N-acetyltransferase of Methanococcus maripaludis (strain DSM 14266 / JCM 13030 / NBRC 101832 / S2 / LL).